The chain runs to 105 residues: Flagellar transcriptional regulator FlhD (105 aa).

Belongs to the FlhD family. In terms of assembly, homodimer; disulfide-linked. Forms a heterohexamer composed of two FlhC and four FlhD subunits. Each FlhC binds a FlhD dimer, forming a heterotrimer, and a hexamer assembles by dimerization of two heterotrimers.

It localises to the cytoplasm. Its function is as follows. Functions in complex with FlhC as a master transcriptional regulator that regulates transcription of several flagellar and non-flagellar operons by binding to their promoter region. Activates expression of class 2 flagellar genes, including fliA, which is a flagellum-specific sigma factor that turns on the class 3 genes. Also regulates genes whose products function in a variety of physiological pathways. This chain is Flagellar transcriptional regulator FlhD, found in Cupriavidus pinatubonensis (strain JMP 134 / LMG 1197) (Cupriavidus necator (strain JMP 134)).